Here is a 209-residue protein sequence, read N- to C-terminus: GTP cyclohydrolase-2 (209 aa).

49 to 53 (RIHSE) is a GTP binding site. 3 residues coordinate Zn(2+): C54, C65, and C67. GTP contacts are provided by residues Q70, 92-94 (EGR), and T114. Catalysis depends on D126, which acts as the Proton acceptor. Residue R128 is the Nucleophile of the active site. GTP-binding residues include T149 and K154.

This sequence belongs to the GTP cyclohydrolase II family. The cofactor is Zn(2+).

It carries out the reaction GTP + 4 H2O = 2,5-diamino-6-hydroxy-4-(5-phosphoribosylamino)-pyrimidine + formate + 2 phosphate + 3 H(+). It functions in the pathway cofactor biosynthesis; riboflavin biosynthesis; 5-amino-6-(D-ribitylamino)uracil from GTP: step 1/4. Catalyzes the conversion of GTP to 2,5-diamino-6-ribosylamino-4(3H)-pyrimidinone 5'-phosphate (DARP), formate and pyrophosphate. The protein is GTP cyclohydrolase-2 of Shewanella pealeana (strain ATCC 700345 / ANG-SQ1).